The sequence spans 376 residues: Heterodimeric geranylgeranyl pyrophosphate synthase large subunit 2 (376 aa).

An N-terminal signal peptide occupies residues 1-24 (MEPQILFLYLSLFILSLNFFFTNL). Isopentenyl diphosphate-binding residues include lysine 125, arginine 128, and histidine 157. Mg(2+) is bound by residues aspartate 164 and aspartate 170. Arginine 175 lines the dimethylallyl diphosphate pocket. Arginine 176 provides a ligand contact to isopentenyl diphosphate. Lysine 261, threonine 262, glutamine 299, lysine 316, and lysine 326 together coordinate dimethylallyl diphosphate.

The protein belongs to the FPP/GGPP synthase family. In terms of assembly, monomer. Part of a heterodimeric geranyl(geranyl)diphosphate synthase. Interacts with GGR. Mg(2+) serves as cofactor. In terms of tissue distribution, mainly expressed in flowers.

The protein resides in the endoplasmic reticulum. The enzyme catalyses isopentenyl diphosphate + dimethylallyl diphosphate = (2E)-geranyl diphosphate + diphosphate. It catalyses the reaction isopentenyl diphosphate + (2E)-geranyl diphosphate = (2E,6E)-farnesyl diphosphate + diphosphate. It carries out the reaction isopentenyl diphosphate + (2E,6E)-farnesyl diphosphate = (2E,6E,10E)-geranylgeranyl diphosphate + diphosphate. It functions in the pathway isoprenoid biosynthesis; farnesyl diphosphate biosynthesis; farnesyl diphosphate from geranyl diphosphate and isopentenyl diphosphate: step 1/1. The protein operates within isoprenoid biosynthesis; geranyl diphosphate biosynthesis; geranyl diphosphate from dimethylallyl diphosphate and isopentenyl diphosphate: step 1/1. Its pathway is isoprenoid biosynthesis; geranylgeranyl diphosphate biosynthesis; geranylgeranyl diphosphate from farnesyl diphosphate and isopentenyl diphosphate: step 1/1. In terms of biological role, heterodimeric geranyl(geranyl)-diphosphate (GPP) synthase large subunit. In vitro, the large subunit catalyzes mainly the trans-addition of the three molecules of IPP onto DMAPP to form geranylgeranyl pyrophosphate while the small subunit alone is inactive. Upon association of the two subunits, the product profile is not changed. This chain is Heterodimeric geranylgeranyl pyrophosphate synthase large subunit 2 (GGPPS2), found in Arabidopsis thaliana (Mouse-ear cress).